The chain runs to 240 residues: MKMMDANEIISFIQKSEKKTPVKVYIKGDLKEVTFPETVQAFVNKKSGVLFGEWSEIKTILDGNSKYIVDYVVENDRRNSAIPMLDLKGIKARIEPGAIIRDHVEIGDNAVIMMNATINIGAVIGEGSMIDMNAVLGGRATVGKNCHVGAGAVLAGVIEPPSAKPVIVEDDVVIGANVVVLEGVTVGKGAVVAAGAVVTEDVPPYTVVAGTPARVIKEIDEKTKAKTEIKQELRQLNPEK.

Belongs to the transferase hexapeptide repeat family. DapH subfamily.

It catalyses the reaction (S)-2,3,4,5-tetrahydrodipicolinate + acetyl-CoA + H2O = L-2-acetamido-6-oxoheptanedioate + CoA. It participates in amino-acid biosynthesis; L-lysine biosynthesis via DAP pathway; LL-2,6-diaminopimelate from (S)-tetrahydrodipicolinate (acetylase route): step 1/3. Catalyzes the transfer of an acetyl group from acetyl-CoA to tetrahydrodipicolinate. This is 2,3,4,5-tetrahydropyridine-2,6-dicarboxylate N-acetyltransferase from Bacillus thuringiensis (strain Al Hakam).